We begin with the raw amino-acid sequence, 249 residues long: Proteasome activator complex subunit 1 (249 aa).

Positions 59–102 (APLDIPVPDPVKEKEKEERKKQQEKEEKEEKKKGDEDDKGPPCG) are disordered. Residues 68 to 98 (PVKEKEKEERKKQQEKEEKEEKKKGDEDDKG) show a composition bias toward basic and acidic residues.

Belongs to the PA28 family. Heterodimer of PSME1 and PSME2, which forms a hexameric ring. PSME1 can form homoheptamers.

Its function is as follows. Implicated in immunoproteasome assembly and required for efficient antigen processing. The PA28 activator complex enhances the generation of class I binding peptides by altering the cleavage pattern of the proteasome. The polypeptide is Proteasome activator complex subunit 1 (Psme1) (Mus musculus (Mouse)).